The chain runs to 727 residues: Elongation factor 2 (727 aa).

Positions 19 to 260 (DQIRNMGICA…MAIKHLPNPL (242 aa)) constitute a tr-type G domain. GTP-binding positions include 28-35 (AHIDHGKT), 94-98 (DTPGH), and 148-151 (NKVD). Residue His-603 is modified to Diphthamide.

Belongs to the TRAFAC class translation factor GTPase superfamily. Classic translation factor GTPase family. EF-G/EF-2 subfamily.

The protein resides in the cytoplasm. Functionally, catalyzes the GTP-dependent ribosomal translocation step during translation elongation. During this step, the ribosome changes from the pre-translocational (PRE) to the post-translocational (POST) state as the newly formed A-site-bound peptidyl-tRNA and P-site-bound deacylated tRNA move to the P and E sites, respectively. Catalyzes the coordinated movement of the two tRNA molecules, the mRNA and conformational changes in the ribosome. The chain is Elongation factor 2 (fusA) from Methanococcus vannielii (strain ATCC 35089 / DSM 1224 / JCM 13029 / OCM 148 / SB).